A 450-amino-acid polypeptide reads, in one-letter code: Allergen Fus c 3 (450 aa).

4 disordered regions span residues 18–87, 99–148, 185–377, and 398–426; these read EPEM…SRAQ, DLHA…HLPP, SGHP…NLVE, and QIRH…RRVS. A compositionally biased stretch (polar residues) spans 31–46; the sequence is PHQQPISSPNRTSRNT. Residues 101-112 show a composition bias toward low complexity; that stretch reads HAPSHPSHLSHG. Positions 113-125 are enriched in basic and acidic residues; sequence APHEQEHAHEIQR. Residues 272-286 show a composition bias toward basic residues; it reads RPRKPARARRQKKEP. Polar residues predominate over residues 291–304; the sequence is DASQGARSSSTGGT. The span at 305-341 shows a compositional bias: low complexity; that stretch reads AHSVSDAASPSSTSHQSRASLTSKSASMTSAASTASS. Residues 356–377 show a composition bias toward basic and acidic residues; sequence TLDKPNDTAEDRRTRASHNLVE. Positions 368-441 constitute a bHLH domain; the sequence is RTRASHNLVE…EMARRHIEAL (74 aa).

This Fusarium culmorum protein is Allergen Fus c 3.